Consider the following 215-residue polypeptide: Nascent polypeptide-associated complex subunit alpha (215 aa).

Residues 1-81 (MPGEATDTVP…SEKKARKAMS (81 aa)) are disordered. The segment covering 9-28 (VPATEQELPQPQAETGSGTE) has biased composition (polar residues). Residues 29 to 42 (SDSDESVPELEEQD) are compositionally biased toward acidic residues. The residue at position 43 (Ser-43) is a Phosphoserine; by ILK1. Over residues 44 to 57 (TQATTQQAQLAAAA) the composition is skewed to low complexity. The segment at 69 to 80 (QSRSEKKARKAM) is required for DNA-binding. The region spanning 70–135 (SRSEKKARKA…AKIEDLSQQA (66 aa)) is the NAC-A/B domain. Residues 93–108 (RVTIRKSKNILFVITK) are RNA/DNA-binding. A Phosphoserine modification is found at Ser-132. Lys-142 is modified (N6-acetyllysine; alternate). A Glycyl lysine isopeptide (Lys-Gly) (interchain with G-Cter in SUMO2); alternate cross-link involves residue Lys-142. At Thr-159 the chain carries Phosphothreonine; by GSK3-beta. Residue Thr-161 is modified to Phosphothreonine. Phosphoserine is present on residues Ser-166, Ser-186, Ser-191, and Ser-203. Residues 176 to 213 (VEVKDIELVMSQANVSRAKAVRALKNNSNDIVNAIMEL) enclose the UBA domain.

This sequence belongs to the NAC-alpha family. In terms of assembly, part of the nascent polypeptide-associated complex (NAC), which is a heterodimer of NACA and BTF3 (via NAC-A/B domains). NAC associates with ribosomes through the BTF3/NACB subunit and contacts the ribosomal protein L23, which is positioned near the exiting site. Both subunits can contact nascent polypeptide chains. NACA may also form homodimers, and only this form binds DNA. Interacts with TBP and JUN. In terms of processing, phosphorylation of Ser-43 by ILK during cell adhesion may promote nuclear localization. Phosphorylation of Thr-159 by GSK3B may promote proteasome mediated degradation.

The protein resides in the cytoplasm. It localises to the nucleus. Functionally, prevents inappropriate targeting of non-secretory polypeptides to the endoplasmic reticulum (ER). Binds to nascent polypeptide chains as they emerge from the ribosome and blocks their interaction with the signal recognition particle (SRP), which normally targets nascent secretory peptides to the ER. Also reduces the inherent affinity of ribosomes for protein translocation sites in the ER membrane (M sites). May act as a specific coactivator for JUN, binding to DNA and stabilizing the interaction of JUN homodimers with target gene promoters. The polypeptide is Nascent polypeptide-associated complex subunit alpha (NACA) (Bos taurus (Bovine)).